A 660-amino-acid polypeptide reads, in one-letter code: MASTLSPSTVTKTPGPPEISERIQNAADISVIVIYFVVVMAVGLWAMLRTNRGTVGGFFLAGRDVTWWPMGASLFASNIGSGHFVGLAGTGAASGIAIAAFEWNALLLLLVLGWFFVPIYIKAGVMTMPEYLRKRFGGKRLQIYLSILSLFICVALRISSDIFSGAIFIKLALGLDLYLAIFSLLAITAIYTITGGLASVIYTDTLQTIIMLIGSFILMGFAFVEVGGYESFTEKYMNAIPTIVEGDNLTISPKCYTPQGDSFHIFRDAVTGDIPWPGMIFGMTVVAAWYWCTDQVIVQRCLSGKDMSHVKAACIMCGYLKLLPMFLMVMPGMISRILYTEKVACVVPSECVKHCGTEVGCSNYAYPLLVMELMPSGLRGLMLSVMLASLMSSLTSIFNSASTLFTMDLYTKIRKQASEKELLIAGRLFIILLIVISIVWVPLVQVAQNGQLFHYIESISSYLGPPIAAVFLLAIFCKRVNEQGAFWGLIIGFVMGLIRMIAEFVYGTGSCLAASNCPQIICGVHYLYFALILFFVSILVVLAISLLTKPIPDVHLYRLCWALRNSTEERIDLDAEEKRHEEAHDGVDEDNPEETRGCLRKAYDLFCGLQRKGPKLSKEEEEAQKRKLTDTSEKPLWKTIVNINAILLLAVAVFVHGYFA.

Over 1–28 (MASTLSPSTVTKTPGPPEISERIQNAAD) the chain is Cytoplasmic. A helical membrane pass occupies residues 29 to 47 (ISVIVIYFVVVMAVGLWAM). At 48–64 (LRTNRGTVGGFFLAGRD) the chain is on the extracellular side. A helical membrane pass occupies residues 65 to 85 (VTWWPMGASLFASNIGSGHFV). At 86–105 (GLAGTGAASGIAIAAFEWNA) the chain is on the cytoplasmic side. A helical transmembrane segment spans residues 106–126 (LLLLLVLGWFFVPIYIKAGVM). Residues 127–171 (TMPEYLRKRFGGKRLQIYLSILSLFICVALRISSDIFSGAIFIKL) are Extracellular-facing. The helical transmembrane segment at 172-191 (ALGLDLYLAIFSLLAITAIY) threads the bilayer. The Cytoplasmic portion of the chain corresponds to 192–208 (TITGGLASVIYTDTLQT). A helical transmembrane segment spans residues 209-229 (IIMLIGSFILMGFAFVEVGGY). Topologically, residues 230–270 (ESFTEKYMNAIPTIVEGDNLTISPKCYTPQGDSFHIFRDAV) are extracellular. N248 carries N-linked (GlcNAc...) asparagine glycosylation. A helical membrane pass occupies residues 271 to 291 (TGDIPWPGMIFGMTVVAAWYW). The Cytoplasmic segment spans residues 292–314 (CTDQVIVQRCLSGKDMSHVKAAC). A helical transmembrane segment spans residues 315-334 (IMCGYLKLLPMFLMVMPGMI). Residues 335 to 423 (SRILYTEKVA…RKQASEKELL (89 aa)) lie on the Extracellular side of the membrane. The chain crosses the membrane as a helical span at residues 424–443 (IAGRLFIILLIVISIVWVPL). The Cytoplasmic portion of the chain corresponds to 444 to 455 (VQVAQNGQLFHY). Residues 456-476 (IESISSYLGPPIAAVFLLAIF) traverse the membrane as a helical segment. Residues 477 to 526 (CKRVNEQGAFWGLIIGFVMGLIRMIAEFVYGTGSCLAASNCPQIICGVHY) are Extracellular-facing. A helical transmembrane segment spans residues 527 to 547 (LYFALILFFVSILVVLAISLL). Residues 548–638 (TKPIPDVHLY…TDTSEKPLWK (91 aa)) are Cytoplasmic-facing. Residues 639 to 659 (TIVNINAILLLAVAVFVHGYF) traverse the membrane as a helical segment.

Belongs to the sodium:solute symporter (SSF) (TC 2.A.21) family. As to expression, kidney, intestine, liver, skeletal muscle and spleen.

The protein localises to the cell membrane. It catalyses the reaction D-glucose(out) + 2 Na(+)(out) = D-glucose(in) + 2 Na(+)(in). With respect to regulation, inhibited by phlorizin. Its function is as follows. Low-affinity sodium/D-glucose symporter with a great selectivity for sugars (D-glucose &gt;&gt; D-galactose). Na(+) and D-glucose transport are tightly coupled at neutral pH, but at acidic pH, ion transport is uncoupled from sugar transport. The protein is Solute carrier family 5 member 4 of Sus scrofa (Pig).